Here is a 486-residue protein sequence, read N- to C-terminus: Bifunctional protein HldE (486 aa).

The ribokinase stretch occupies residues 1 to 331 (MSTNVADLLH…NALTAESVPV (331 aa)). 207–210 (NLGE) is a binding site for ATP. D276 is an active-site residue. Residues 358 to 486 (VTNGCFDLLH…STTKLIEKGH (129 aa)) form a cytidylyltransferase region.

In the N-terminal section; belongs to the carbohydrate kinase PfkB family. It in the C-terminal section; belongs to the cytidylyltransferase family. In terms of assembly, homodimer.

It carries out the reaction D-glycero-beta-D-manno-heptose 7-phosphate + ATP = D-glycero-beta-D-manno-heptose 1,7-bisphosphate + ADP + H(+). It catalyses the reaction D-glycero-beta-D-manno-heptose 1-phosphate + ATP + H(+) = ADP-D-glycero-beta-D-manno-heptose + diphosphate. Its pathway is nucleotide-sugar biosynthesis; ADP-L-glycero-beta-D-manno-heptose biosynthesis; ADP-L-glycero-beta-D-manno-heptose from D-glycero-beta-D-manno-heptose 7-phosphate: step 1/4. It functions in the pathway nucleotide-sugar biosynthesis; ADP-L-glycero-beta-D-manno-heptose biosynthesis; ADP-L-glycero-beta-D-manno-heptose from D-glycero-beta-D-manno-heptose 7-phosphate: step 3/4. Its function is as follows. Catalyzes the phosphorylation of D-glycero-D-manno-heptose 7-phosphate at the C-1 position to selectively form D-glycero-beta-D-manno-heptose-1,7-bisphosphate. Catalyzes the ADP transfer from ATP to D-glycero-beta-D-manno-heptose 1-phosphate, yielding ADP-D-glycero-beta-D-manno-heptose. The sequence is that of Bifunctional protein HldE from Koribacter versatilis (strain Ellin345).